A 300-amino-acid polypeptide reads, in one-letter code: Ecto-ADP-ribosyltransferase 4 (300 aa).

A signal peptide spans 1–23; sequence MALWLPGGQLTLLLLLWVQQTPA. The Extracellular portion of the chain corresponds to 24–269; sequence GSTEAPLKVD…QLLKACSKKC (246 aa). Intrachain disulfides connect Cys-48/Cys-259 and Cys-161/Cys-210. Positions 70–255 constitute a TR mART core domain; that stretch reads KYYSRAWQKA…INLRSAGNMS (186 aa). N-linked (GlcNAc...) asparagine glycosylation is found at Asn-110 and Asn-157. Residue Gln-185 participates in NAD(+) binding. Asn-201 carries N-linked (GlcNAc...) asparagine glycosylation. NAD(+) is bound at residue Ser-219. The N-linked (GlcNAc...) asparagine glycan is linked to Asn-253. A lipid anchor (GPI-anchor amidated alanine) is attached at Ala-264. Residues 265–300 constitute a propeptide, removed in mature form; the sequence is CSKKCAPAPVVIGCLFLVTVVISSKSRAQRNLLAPF. The chain crosses the membrane as a helical span at residues 270 to 286; the sequence is APAPVVIGCLFLVTVVI. Over 287 to 300 the chain is Cytoplasmic; sequence SSKSRAQRNLLAPF.

This sequence belongs to the Arg-specific ADP-ribosyltransferase family.

Its subcellular location is the membrane. It localises to the cell membrane. It catalyses the reaction L-arginyl-[protein] + NAD(+) = N(omega)-(ADP-D-ribosyl)-L-arginyl-[protein] + nicotinamide + H(+). The sequence is that of Ecto-ADP-ribosyltransferase 4 (Art4) from Mus musculus (Mouse).